The following is a 303-amino-acid chain: Probable cell division protein WhiA (303 aa).

Residues 272–303 constitute a DNA-binding region (H-T-H motif); sequence SIQQLADSLSKPLTKSGVNHRLRKINKIADEL.

The protein belongs to the WhiA family.

Its function is as follows. Involved in cell division and chromosome segregation. The polypeptide is Probable cell division protein WhiA (Streptococcus gordonii (strain Challis / ATCC 35105 / BCRC 15272 / CH1 / DL1 / V288)).